The following is a 139-amino-acid chain: Ribosome-binding factor A (139 aa).

The segment at 120-139 is disordered; the sequence is PENLLAVEDNTDEDDESFSE. The span at 128–139 shows a compositional bias: acidic residues; it reads DNTDEDDESFSE.

This sequence belongs to the RbfA family. In terms of assembly, monomer. Binds 30S ribosomal subunits, but not 50S ribosomal subunits or 70S ribosomes.

It localises to the cytoplasm. Functionally, one of several proteins that assist in the late maturation steps of the functional core of the 30S ribosomal subunit. Associates with free 30S ribosomal subunits (but not with 30S subunits that are part of 70S ribosomes or polysomes). Required for efficient processing of 16S rRNA. May interact with the 5'-terminal helix region of 16S rRNA. The sequence is that of Ribosome-binding factor A from Nostoc punctiforme (strain ATCC 29133 / PCC 73102).